The sequence spans 572 residues: Proline--tRNA ligase (572 aa).

Belongs to the class-II aminoacyl-tRNA synthetase family. ProS type 1 subfamily. As to quaternary structure, homodimer.

It localises to the cytoplasm. The catalysed reaction is tRNA(Pro) + L-proline + ATP = L-prolyl-tRNA(Pro) + AMP + diphosphate. Catalyzes the attachment of proline to tRNA(Pro) in a two-step reaction: proline is first activated by ATP to form Pro-AMP and then transferred to the acceptor end of tRNA(Pro). As ProRS can inadvertently accommodate and process non-cognate amino acids such as alanine and cysteine, to avoid such errors it has two additional distinct editing activities against alanine. One activity is designated as 'pretransfer' editing and involves the tRNA(Pro)-independent hydrolysis of activated Ala-AMP. The other activity is designated 'posttransfer' editing and involves deacylation of mischarged Ala-tRNA(Pro). The misacylated Cys-tRNA(Pro) is not edited by ProRS. This Buchnera aphidicola subsp. Acyrthosiphon pisum (strain 5A) protein is Proline--tRNA ligase.